Here is a 101-residue protein sequence, read N- to C-terminus: Protein Tat (101 aa).

Positions 1–24 (MEPVDPNREPWNHPGSQPKTACTN) are interaction with human CREBBP. Positions 1–48 (MEPVDPNREPWNHPGSQPKTACTNCYCKKCCYHCQVCFLQKGLGISYG) are transactivation. Residues C22, C25, and C27 each contribute to the Zn(2+) site. Positions 22–37 (CTNCYCKKCCYHCQVC) are cysteine-rich. K28 is subject to N6-acetyllysine; by host PCAF. Residues C30, H33, C34, and C37 each coordinate Zn(2+). A core region spans residues 38-48 (FLQKGLGISYG). The interval 48–101 (GRKKRRQRRSAPPGSKNHQDLIPEQPLFQTQRKPTGPEESKKEVESKAEPDRFD) is disordered. Positions 49–57 (RKKRRQRRS) match the Nuclear localization signal, RNA-binding (TAR), and protein transduction motif. An interaction with the host capping enzyme RNGTT region spans residues 49 to 86 (RKKRRQRRSAPPGSKNHQDLIPEQPLFQTQRKPTGPEE). An N6-acetyllysine; by host EP300 and GCN5L2 mark is found at K50 and K51. An asymmetric dimethylarginine; by host PRMT6 mark is found at R52 and R53. Positions 82–101 (TGPEESKKEVESKAEPDRFD) are enriched in basic and acidic residues.

It belongs to the lentiviruses Tat family. In terms of assembly, interacts with host CCNT1. Associates with the P-TEFb complex composed at least of Tat, P-TEFb (CDK9 and CCNT1), TAR RNA, RNA Pol II. Recruits the HATs CREBBP, TAF1/TFIID, EP300, PCAF and GCN5L2. Interacts with host KAT5/Tip60; this interaction targets the latter to degradation. Interacts with the host deacetylase SIRT1. Interacts with host capping enzyme RNGTT; this interaction stimulates RNGTT. Binds to host KDR, and to the host integrins ITGAV/ITGB3 and ITGA5/ITGB1. Interacts with host KPNB1/importin beta-1 without previous binding to KPNA1/importin alpha-1. Interacts with EIF2AK2. Interacts with host nucleosome assembly protein NAP1L1; this interaction may be required for the transport of Tat within the nucleus, since the two proteins interact at the nuclear rim. Interacts with host C1QBP/SF2P32; this interaction involves lysine-acetylated Tat. Interacts with the host chemokine receptors CCR2, CCR3 and CXCR4. Interacts with host DPP4/CD26; this interaction may trigger an anti-proliferative effect. Interacts with host LDLR. Interacts with the host extracellular matrix metalloproteinase MMP1. Interacts with host PRMT6; this interaction mediates Tat's methylation. Interacts with, and is ubiquitinated by MDM2/Hdm2. Interacts with host PSMC3 and HTATIP2. Interacts with STAB1; this interaction may overcome SATB1-mediated repression of IL2 and IL2RA (interleukin) in T cells by binding to the same domain than HDAC1. Interacts (when acetylated) with human CDK13, thereby increasing HIV-1 mRNA splicing and promoting the production of the doubly spliced HIV-1 protein Nef. Interacts with host TBP; this interaction modulates the activity of transcriptional pre-initiation complex. Interacts with host RELA. Interacts with host PLSCR1; this interaction negatively regulates Tat transactivation activity by altering its subcellular distribution. Post-translationally, asymmetrical arginine methylation by host PRMT6 seems to diminish the transactivation capacity of Tat and affects the interaction with host CCNT1. In terms of processing, acetylation by EP300, CREBBP, GCN5L2/GCN5 and PCAF regulates the transactivation activity of Tat. EP300-mediated acetylation of Lys-50 promotes dissociation of Tat from the TAR RNA through the competitive binding to PCAF's bromodomain. In addition, the non-acetylated Tat's N-terminus can also interact with PCAF. PCAF-mediated acetylation of Lys-28 enhances Tat's binding to CCNT1. Lys-50 is deacetylated by SIRT1. Polyubiquitination by host MDM2 does not target Tat to degradation, but activates its transactivation function and fosters interaction with CCNT1 and TAR RNA. Post-translationally, phosphorylated by EIF2AK2 on serine and threonine residues adjacent to the basic region important for TAR RNA binding and function. Phosphorylation of Tat by EIF2AK2 is dependent on the prior activation of EIF2AK2 by dsRNA.

It localises to the host nucleus. The protein localises to the host nucleolus. The protein resides in the host cytoplasm. It is found in the secreted. Functionally, transcriptional activator that increases RNA Pol II processivity, thereby increasing the level of full-length viral transcripts. Recognizes a hairpin structure at the 5'-LTR of the nascent viral mRNAs referred to as the transactivation responsive RNA element (TAR) and recruits the cyclin T1-CDK9 complex (P-TEFb complex) that will in turn hyperphosphorylate the RNA polymerase II to allow efficient elongation. The CDK9 component of P-TEFb and other Tat-activated kinases hyperphosphorylate the C-terminus of RNA Pol II that becomes stabilized and much more processive. Other factors such as HTATSF1/Tat-SF1, SUPT5H/SPT5, and HTATIP2 are also important for Tat's function. Besides its effect on RNA Pol II processivity, Tat induces chromatin remodeling of proviral genes by recruiting the histone acetyltransferases (HATs) CREBBP, EP300 and PCAF to the chromatin. This also contributes to the increase in proviral transcription rate, especially when the provirus integrates in transcriptionally silent region of the host genome. To ensure maximal activation of the LTR, Tat mediates nuclear translocation of NF-kappa-B by interacting with host RELA. Through its interaction with host TBP, Tat may also modulate transcription initiation. Tat can reactivate a latently infected cell by penetrating in it and transactivating its LTR promoter. In the cytoplasm, Tat is thought to act as a translational activator of HIV-1 mRNAs. Extracellular circulating Tat can be endocytosed by surrounding uninfected cells via the binding to several surface receptors such as CD26, CXCR4, heparan sulfate proteoglycans (HSPG) or LDLR. Neurons are rarely infected, but they internalize Tat via their LDLR. Through its interaction with nuclear HATs, Tat is potentially able to control the acetylation-dependent cellular gene expression. Modulates the expression of many cellular genes involved in cell survival, proliferation or in coding for cytokines or cytokine receptors. Tat plays a role in T-cell and neurons apoptosis. Tat induced neurotoxicity and apoptosis probably contribute to neuroAIDS. Circulating Tat also acts as a chemokine-like and/or growth factor-like molecule that binds to specific receptors on the surface of the cells, affecting many cellular pathways. In the vascular system, Tat binds to ITGAV/ITGB3 and ITGA5/ITGB1 integrins dimers at the surface of endothelial cells and competes with bFGF for heparin-binding sites, leading to an excess of soluble bFGF. The protein is Protein Tat of Human immunodeficiency virus type 1 group M subtype J (isolate SE9173) (HIV-1).